We begin with the raw amino-acid sequence, 476 residues long: MASSFSGVLQLTDLDDFIGPSQECIKPIKVEKKAGRAAAKIQIEDDGSYVQINPEGAARKLEKAKITLNDCLACSGCVTSAETILITQQSHEELYKILKQNKTENPLEHKVVVVSVSPQSWASLAARFNLIMQDTAQKLTAFFKQLGVHHVFDTNFSRNFSLLESQREFIQRFKRQKEDKKSLPMLASACPGWICYAEKTHGSFILPYISSTKSPQQVMGSLVKSHFAKEKNLKPNQIYHVTVMPCYDKKLEASRPDFYNQEYETREVDCVITTGEVLRMLEQEGLSLSDVDPSPLDTLFGSAVQEEPVGHQGGGSGGYLEHVFRHAAQELFGVHVDTVVYKPLKNKDFQEVTLEQDGNVVLHFALAYGFRNIQNLVQKLKRGRCPYHYVEVMACPSGCLNGGGQIKAEGEGSKDLLQRVEDLYNTVRTERPEEREEVAQLYGDWLEDKDSAKARQALHTQYHAVEKINSGLTIKW.

The [4Fe-4S] cluster site is built by cysteine 24, cysteine 71, cysteine 74, cysteine 77, cysteine 190, cysteine 246, cysteine 395, and cysteine 399.

It belongs to the NARF family. In terms of assembly, component of the CIA complex.

Its function is as follows. Component of the cytosolic iron-sulfur protein assembly (CIA) complex, a multiprotein complex that mediates the incorporation of iron-sulfur cluster into extramitochondrial Fe/S proteins. The sequence is that of Cytosolic Fe-S cluster assembly factor narfl (narfl) from Xenopus tropicalis (Western clawed frog).